The primary structure comprises 507 residues: MVTIRADEISNIIRERIQHYTKKINILNTGTVLQVGDGIVRIYGLDEVMAGELIEFEEGTKGIALNLESKNVGVVLMGDGLRIKEGGSVKATGRIAQVPVGDAYLGRVINALATPIDGRGEILSSEFRLIDSPAPGILSRRSIYEPLQTGLIAIDSMIPIGRGQRELIIGDRQTGKTAVATDTILNQQSKNVICVYVAIGQKASSVAQVVTTLQEKGALQYTIVVAEMADSAATLQYLAPYTGAALAEYFMYKERHTLIIYDDLSKQAQAYRQMSLLLRRPPGREAYPGDVFYLHSRLLERAAKLSSKLGEGSMTALPIVETQSGDVSAYIPTNVISITDGQIFLSADLFNAGLRPAINVGISVSRVGSAAQIKAMKQVASKLKLELAQFAELEAFAQFASDLDQASQNLLARGQRLRELLKQSQSAPLTTAEQIMSIYAGINGYLDSLELGQIGKFLRELSDYLKVNKPRFQEIINSTKTFTEEAEAILKDTIPSEKDRFLLEEKI.

170 to 177 (GDRQTGKT) contributes to the ATP binding site.

The protein belongs to the ATPase alpha/beta chains family. F-type ATPases have 2 components, CF(1) - the catalytic core - and CF(0) - the membrane proton channel. CF(1) has five subunits: alpha(3), beta(3), gamma(1), delta(1), epsilon(1). CF(0) has four main subunits: a, b, b' and c.

It localises to the plastid membrane. It carries out the reaction ATP + H2O + 4 H(+)(in) = ADP + phosphate + 5 H(+)(out). Its function is as follows. Produces ATP from ADP in the presence of a proton gradient across the membrane. The alpha chain is a regulatory subunit. The protein is ATP synthase subunit alpha, plastid of Cuscuta gronovii (Common dodder).